The sequence spans 189 residues: UPF0398 protein LVIS_0849 (189 aa).

The protein belongs to the UPF0398 family.

The polypeptide is UPF0398 protein LVIS_0849 (Levilactobacillus brevis (strain ATCC 367 / BCRC 12310 / CIP 105137 / JCM 1170 / LMG 11437 / NCIMB 947 / NCTC 947) (Lactobacillus brevis)).